The chain runs to 129 residues: Phosphoribosyl-AMP cyclohydrolase (129 aa).

Mg(2+) is bound at residue aspartate 82. Position 83 (cysteine 83) interacts with Zn(2+). Mg(2+)-binding residues include aspartate 84 and aspartate 86. Zn(2+) is bound by residues cysteine 99 and cysteine 106.

The protein belongs to the PRA-CH family. In terms of assembly, homodimer. The cofactor is Mg(2+). It depends on Zn(2+) as a cofactor.

It localises to the cytoplasm. It carries out the reaction 1-(5-phospho-beta-D-ribosyl)-5'-AMP + H2O = 1-(5-phospho-beta-D-ribosyl)-5-[(5-phospho-beta-D-ribosylamino)methylideneamino]imidazole-4-carboxamide. It functions in the pathway amino-acid biosynthesis; L-histidine biosynthesis; L-histidine from 5-phospho-alpha-D-ribose 1-diphosphate: step 3/9. In terms of biological role, catalyzes the hydrolysis of the adenine ring of phosphoribosyl-AMP. The sequence is that of Phosphoribosyl-AMP cyclohydrolase from Methanosarcina barkeri (strain Fusaro / DSM 804).